A 510-amino-acid chain; its full sequence is 2,3-bisphosphoglycerate-independent phosphoglycerate mutase (510 aa).

2 residues coordinate Mn(2+): aspartate 13 and serine 63. The active-site Phosphoserine intermediate is serine 63. Substrate-binding positions include histidine 124, 154–155, arginine 186, arginine 192, 262–265, and lysine 334; these read RD and RADR. Residues aspartate 401, histidine 405, aspartate 442, histidine 443, and histidine 461 each coordinate Mn(2+).

This sequence belongs to the BPG-independent phosphoglycerate mutase family. Monomer. Mn(2+) serves as cofactor.

The catalysed reaction is (2R)-2-phosphoglycerate = (2R)-3-phosphoglycerate. It participates in carbohydrate degradation; glycolysis; pyruvate from D-glyceraldehyde 3-phosphate: step 3/5. In terms of biological role, catalyzes the interconversion of 2-phosphoglycerate and 3-phosphoglycerate. The sequence is that of 2,3-bisphosphoglycerate-independent phosphoglycerate mutase from Vibrio vulnificus (strain YJ016).